Here is a 244-residue protein sequence, read N- to C-terminus: Neurogenin-1 (244 aa).

Disordered stretches follow at residues 1–27 (MPAP…SSFL) and 39–82 (LAST…ARVR). Positions 10–27 (SDLDCSSSNSSSDLSSFL) are enriched in low complexity. The region spanning 93–145 (SRRVKANDRERNRMHNLNAALDALRSVLPSFPDDTKLTKIETLRFAYNYIWAL) is the bHLH domain.

Efficient DNA binding requires dimerization with another bHLH protein. In terms of tissue distribution, expression restricted to the embryonic nervous system.

The protein localises to the nucleus. In terms of biological role, acts as a transcriptional regulator. Involved in the initiation of neuronal differentiation. Activates transcription by binding to the E box (5'-CANNTG-3'). Associates with chromatin to enhancer regulatory elements in genes encoding key transcriptional regulators of neurogenesis. This is Neurogenin-1 (Neurog1) from Mus musculus (Mouse).